Here is a 1011-residue protein sequence, read N- to C-terminus: MSSAQTPLFLANQTKVFDHLIPLHKPFISSPNPVSQSFPMWRNIAKQAISRSAARLNVSSQTRGLLVSSPESIFSKNLSFRFPVLGSPCHGKGFRCLSGITRREEFSKSERCLSGTLARGYTSVAEEEVLSTDVEEEPEVDELLKEMKKEKKRESHRSWRMKKQDQFGMGRTKFQNLWRRQVKIETEEWERAAAEYMELLTDMCEQKLAPNLPYVKSLFLGWFEPLRDAIAKDQELYRLGKSKATYAHYLDQLPADKISVITMHKLMGHLMTGGDNGCVKVVHAACTVGDAIEQEIRICTFLDKKKKGDDNEESGGVENETSMKEQDKLRKKVNELIKKQKLSAVRKILQSHDYTKPWIADVRAKVGSRLIELLVRTAYIQSPADQQDNDLPDVRPAFVHTFKVAKGSMNSGRKYGVIECDPLVRKGLEKSGRYAVMPYMPMLVPPLKWSGYDKGAYLFLTSYIMKTHGAKQQREALKSAPKGQLQPVFEALDTLGSTKWRVNKRVLTVVDRIWSSGGCVADMVDRSDVPLPEKPDTEDEGILKKWKWEVKSAKKVNSERHSQRCDTELKLSVARKMKDEEAFYYPHNMDFRGRAYPMPPHLNHLGSDLCRGVLEFAEGRPMGISGLRWLKIHLANLYAGGVDKLSLDGRLAFTENHLDDIFDSADRPLEGSRWWLQAEDPFQCLAVCISLTEALRSPSPETVLSHIPIHQDGSCNGLQHYAALGRDTLGAEAVNLVAGEKPADVYSGIATRVLDIMRRDADRDPEVFPEALRARKLLNQVDRKLVKQTVMTSVYGVTYIGARDQIKRRLKERSDFGDEKEVFGAACYAAKVTLAAIDEMFQAARAIMRWFGECAKIIASENETVRWTTPLGLPVVQPYHQMGTKLVKTSLQTLSLQHETDQVIVRRQRTAFPPNFIHSLDGSHMMMTAVACKRAGVCFAGVHDSFWTHACDVDKLNIILREKFVELYSQPILENLLESFEQSFPHLDFPPLPERGDLDLKVVLDSPYFFN.

The tract at residues 307 to 326 is disordered; that stretch reads KGDDNEESGGVENETSMKEQ. Residues aspartate 712, lysine 787, and aspartate 944 contribute to the active site.

The protein belongs to the phage and mitochondrial RNA polymerase family. As to quaternary structure, interacts with NIP1 and NIP2.

The protein localises to the plastid. It is found in the chloroplast. Its subcellular location is the mitochondrion. It catalyses the reaction RNA(n) + a ribonucleoside 5'-triphosphate = RNA(n+1) + diphosphate. Functionally, DNA-dependent RNA polymerase catalyzes the transcription of DNA into RNA using the four ribonucleoside triphosphates as substrates. This is DNA-directed RNA polymerase 2, chloroplastic/mitochondrial (RPOT2) from Arabidopsis thaliana (Mouse-ear cress).